The primary structure comprises 520 residues: Amine oxidase [flavin-containing] B (520 aa).

N-acetylserine is present on Ser2. Topologically, residues 2-489 are cytoplasmic; it reads SNKCDVVVVG…TFLERHLPSV (488 aa). Lys52 carries the N6-acetyllysine modification. Position 397 is an S-8alpha-FAD cysteine (Cys397). The chain crosses the membrane as a helical; Anchor for type IV membrane protein span at residues 490–516; sequence PGLLRLIGLTTIFSATALGFLAHKRGL. The Mitochondrial intermembrane portion of the chain corresponds to 517–520; that stretch reads LVRV.

In terms of assembly, monomer, homo- or heterodimer (containing two subunits of similar size). Each subunit contains a covalently bound flavin. Enzymatically active as monomer. It depends on FAD as a cofactor.

The protein resides in the mitochondrion outer membrane. It carries out the reaction a secondary aliphatic amine + O2 + H2O = a primary amine + an aldehyde + H2O2. The catalysed reaction is (R)-adrenaline + O2 + H2O = (R)-3,4-dihydroxymandelaldehyde + methylamine + H2O2. The enzyme catalyses a primary methyl amine + O2 + H2O = an aldehyde + H2O2 + NH4(+). It catalyses the reaction benzylamine + O2 + H2O = benzaldehyde + H2O2 + NH4(+). It carries out the reaction dopamine + O2 + H2O = 3,4-dihydroxyphenylacetaldehyde + H2O2 + NH4(+). The catalysed reaction is tyramine + O2 + H2O = (4-hydroxyphenyl)acetaldehyde + H2O2 + NH4(+). The enzyme catalyses (R)-noradrenaline + O2 + H2O = (R)-3,4-dihydroxymandelaldehyde + H2O2 + NH4(+). It catalyses the reaction 2-phenylethylamine + O2 + H2O = 2-phenylacetaldehyde + H2O2 + NH4(+). It carries out the reaction N-acetylputrescine + O2 + H2O = 4-acetamidobutanal + H2O2 + NH4(+). Inhibited by deprenyl. Functionally, catalyzes the oxidative deamination of primary and some secondary amines such as neurotransmitters, and exogenous amines including the tertiary amine, neurotoxin 1-methyl-4-phenyl-1,2,3,6-tetrahydropyridine (MPTP), with concomitant reduction of oxygen to hydrogen peroxide and participates in the metabolism of neuroactive and vasoactive amines in the central nervous system and peripheral tissues. Preferentially degrades benzylamine and phenylethylamine. The sequence is that of Amine oxidase [flavin-containing] B from Homo sapiens (Human).